The following is a 396-amino-acid chain: Aspartate aminotransferase (396 aa).

Residues Gly-34, Trp-130, and Asn-183 each coordinate L-aspartate. N6-(pyridoxal phosphate)lysine is present on Lys-246. Arg-374 is an L-aspartate binding site.

It belongs to the class-I pyridoxal-phosphate-dependent aminotransferase family. Homodimer. The cofactor is pyridoxal 5'-phosphate.

The protein localises to the cytoplasm. It carries out the reaction L-aspartate + 2-oxoglutarate = oxaloacetate + L-glutamate. In Escherichia coli (strain K12), this protein is Aspartate aminotransferase (aspC).